Reading from the N-terminus, the 269-residue chain is Shikimate dehydrogenase (NADP(+)) (269 aa).

Residues 22-24 and threonine 68 each bind shikimate; that span reads TLS. The Proton acceptor role is filled by lysine 72. Residues asparagine 93 and aspartate 104 each contribute to the shikimate site. NADP(+) is bound by residues 128–132, 152–157, and phenylalanine 210; these read GAGGA and NRTNLR. Residue tyrosine 212 participates in shikimate binding. Glycine 233 serves as a coordination point for NADP(+).

It belongs to the shikimate dehydrogenase family. Homodimer.

It carries out the reaction shikimate + NADP(+) = 3-dehydroshikimate + NADPH + H(+). It functions in the pathway metabolic intermediate biosynthesis; chorismate biosynthesis; chorismate from D-erythrose 4-phosphate and phosphoenolpyruvate: step 4/7. Its function is as follows. Involved in the biosynthesis of the chorismate, which leads to the biosynthesis of aromatic amino acids. Catalyzes the reversible NADPH linked reduction of 3-dehydroshikimate (DHSA) to yield shikimate (SA). The sequence is that of Shikimate dehydrogenase (NADP(+)) from Saccharolobus islandicus (strain Y.N.15.51 / Yellowstone #2) (Sulfolobus islandicus).